The primary structure comprises 874 residues: Lon protease (874 aa).

Residues 18–261 (LPVLPLDDAV…RLLTWTKEHL (244 aa)) enclose the Lon N-terminal domain. Disordered regions lie at residues 47–68 (VDAARTGGSAGSSDARAPGISS), 120–144 (GGVRPAPAGTDTTGTGTADATSGAG), and 298–318 (LSELDGSGGGADGASGSEPAD). Over residues 124 to 142 (PAPAGTDTTGTGTADATSG) the composition is skewed to low complexity. 430 to 437 (GPPGVGKT) lines the ATP pocket. In terms of domain architecture, Lon proteolytic spans 667–851 (TALPGVATGL…REVLDLALEP (185 aa)). Catalysis depends on residues Ser-757 and Lys-800. The tract at residues 853–874 (FDADHGGRSPGRAGHSPTALAA) is disordered.

This sequence belongs to the peptidase S16 family. As to quaternary structure, homohexamer. Organized in a ring with a central cavity.

The protein localises to the cytoplasm. The enzyme catalyses Hydrolysis of proteins in presence of ATP.. Its function is as follows. ATP-dependent serine protease that mediates the selective degradation of mutant and abnormal proteins as well as certain short-lived regulatory proteins. Required for cellular homeostasis and for survival from DNA damage and developmental changes induced by stress. Degrades polypeptides processively to yield small peptide fragments that are 5 to 10 amino acids long. Binds to DNA in a double-stranded, site-specific manner. This Frankia alni (strain DSM 45986 / CECT 9034 / ACN14a) protein is Lon protease.